A 228-amino-acid chain; its full sequence is 7-cyano-7-deazaguanine synthase (228 aa).

7–17 (LSGGMDSLVTT) contacts ATP. C187, C195, C198, and C201 together coordinate Zn(2+).

The protein belongs to the QueC family. Requires Zn(2+) as cofactor.

It carries out the reaction 7-carboxy-7-deazaguanine + NH4(+) + ATP = 7-cyano-7-deazaguanine + ADP + phosphate + H2O + H(+). The protein operates within purine metabolism; 7-cyano-7-deazaguanine biosynthesis. In terms of biological role, catalyzes the ATP-dependent conversion of 7-carboxy-7-deazaguanine (CDG) to 7-cyano-7-deazaguanine (preQ(0)). In Chlorobium chlorochromatii (strain CaD3), this protein is 7-cyano-7-deazaguanine synthase.